The chain runs to 243 residues: UTP--glucose-1-phosphate uridylyltransferase AglF (243 aa).

It belongs to the UDPGP type 2 family.

The catalysed reaction is alpha-D-glucose 1-phosphate + UTP + H(+) = UDP-alpha-D-glucose + diphosphate. Its pathway is cell surface structure biogenesis; S-layer biogenesis. Functionally, involved in the assembly of a N-linked pentasaccharide that decorates the S-layer glycoprotein and flagellins. Involved in the biosynthesis of the hexuronic acid found at position 3 of the pentasaccharide. This chain is UTP--glucose-1-phosphate uridylyltransferase AglF (aglF), found in Haloferax volcanii (strain ATCC 29605 / DSM 3757 / JCM 8879 / NBRC 14742 / NCIMB 2012 / VKM B-1768 / DS2) (Halobacterium volcanii).